The sequence spans 508 residues: Nucleolar complex protein 4 homolog (508 aa).

The next 3 helical transmembrane spans lie at 288–308 (VAYGVGGAISLLALNGLFILI), 341–361 (HLADLFLSSSHLPAYLVAAFI), and 367–387 (LALTAPPEALLMVIPFICNLF).

The protein belongs to the CBF/MAK21 family.

The protein localises to the nucleus membrane. Its subcellular location is the nucleus. It is found in the nucleolus. In Gallus gallus (Chicken), this protein is Nucleolar complex protein 4 homolog (NOC4L).